The primary structure comprises 162 residues: Probable chemoreceptor glutamine deamidase CheD (162 aa).

It belongs to the CheD family.

It catalyses the reaction L-glutaminyl-[protein] + H2O = L-glutamyl-[protein] + NH4(+). Its function is as follows. Probably deamidates glutamine residues to glutamate on methyl-accepting chemotaxis receptors (MCPs), playing an important role in chemotaxis. This Clostridium novyi (strain NT) protein is Probable chemoreceptor glutamine deamidase CheD.